A 434-amino-acid polypeptide reads, in one-letter code: Alpha-enolase (434 aa).

Residue serine 2 is modified to N-acetylserine. Serine 40 serves as a coordination point for Mg(2+). Tyrosine 44 carries the phosphotyrosine modification. Lysine 60 bears the N6-acetyllysine; alternate mark. The residue at position 60 (lysine 60) is an N6-succinyllysine; alternate. Position 71 is an N6-acetyllysine (lysine 71). Residue lysine 89 is modified to N6-acetyllysine; alternate. Residue lysine 89 is modified to N6-succinyllysine; alternate. An N6-acetyllysine mark is found at lysine 92 and lysine 126. Residues histidine 158 and glutamate 167 each coordinate substrate. N6-acetyllysine occurs at positions 193 and 199. Lysine 202 bears the N6-acetyllysine; alternate mark. A Glycyl lysine isopeptide (Lys-Gly) (interchain with G-Cter in SUMO2); alternate cross-link involves residue lysine 202. Glutamate 210 (proton donor) is an active-site residue. Residues lysine 228 and lysine 233 each carry the N6-acetyllysine; alternate modification. N6-succinyllysine; alternate is present on lysine 228. Lysine 228 bears the N6-(2-hydroxyisobutyryl)lysine; alternate mark. The residue at position 233 (lysine 233) is an N6-malonyllysine; alternate. Mg(2+) is bound at residue aspartate 245. The residue at position 254 (serine 254) is a Phosphoserine. Lysine 256 bears the N6-acetyllysine mark. Serine 263 is modified (phosphoserine). At lysine 281 the chain carries N6-acetyllysine; alternate. Lysine 281 carries the post-translational modification N6-(2-hydroxyisobutyryl)lysine; alternate. Tyrosine 287 is modified (phosphotyrosine). Residue serine 291 is modified to Phosphoserine. Mg(2+) is bound by residues glutamate 293 and aspartate 318. Substrate contacts are provided by glutamate 293 and aspartate 318. Residues lysine 335 and lysine 343 each carry the N6-acetyllysine modification. Residue lysine 343 is the Proton acceptor of the active site. Substrate contacts are provided by residues 370–373 (SHRS) and lysine 394. Residues 405 to 434 (AKYNQILRIEEELGSKAKFAGRSFRNPLAK) are required for interaction with PLG. The residue at position 406 (lysine 406) is an N6-acetyllysine. Residue lysine 420 is modified to N6-acetyllysine; alternate. Lysine 420 carries the N6-succinyllysine; alternate modification. At lysine 420 the chain carries N6-malonyllysine; alternate.

This sequence belongs to the enolase family. As to quaternary structure, mammalian enolase is composed of 3 isozyme subunits, alpha, beta and gamma, which can form homodimers or heterodimers which are cell-type and development-specific. ENO1 interacts with PLG in the neuronal plasma membrane and promotes its activation. The C-terminal lysine is required for this binding. In vitro, interacts with several glycolytic enzymes including PKM, PGM, CKM and aldolase. Also binds troponin, in vitro. Interacts with ENO4 and PGAM2. Interacts with CMTM6. Mg(2+) is required as a cofactor. ISGylated. In terms of processing, lysine 2-hydroxyisobutyrylation (Khib) by p300/EP300 activates the phosphopyruvate hydratase activity. In terms of tissue distribution, testis. Found in the principal piece of sperm tail (at protein level). The alpha/alpha homodimer is expressed in embryo and in most adult tissues. The alpha/beta heterodimer and the beta/beta homodimer are found in striated muscle, and the alpha/gamma heterodimer and the gamma/gamma homodimer in neurons. In striated muscle, expression of ENO1 appears to be independent of fiber type.

The protein localises to the cytoplasm. The protein resides in the cell membrane. It carries out the reaction (2R)-2-phosphoglycerate = phosphoenolpyruvate + H2O. It functions in the pathway carbohydrate degradation; glycolysis; pyruvate from D-glyceraldehyde 3-phosphate: step 4/5. Glycolytic enzyme the catalyzes the conversion of 2-phosphoglycerate to phosphoenolpyruvate. In addition to glycolysis, involved in various processes such as growth control, hypoxia tolerance and allergic responses. May also function in the intravascular and pericellular fibrinolytic system due to its ability to serve as a receptor and activator of plasminogen on the cell surface of several cell-types such as leukocytes and neurons. Stimulates immunoglobulin production. The protein is Alpha-enolase (Eno1) of Mus musculus (Mouse).